A 968-amino-acid chain; its full sequence is RNA polymerase-associated protein RapA (968 aa).

The Helicase ATP-binding domain maps to 164 to 334 (DVGRRHAPRV…FARLRLLDPN (171 aa)). 177 to 184 (DEVGLGKT) contributes to the ATP binding site. The DEAH box signature appears at 280 to 283 (DEAH). Residues 490–662 (RVEWLMGYLT…YLASPDQTEG (173 aa)) form the Helicase C-terminal domain.

This sequence belongs to the SNF2/RAD54 helicase family. RapA subfamily. In terms of assembly, interacts with the RNAP. Has a higher affinity for the core RNAP than for the holoenzyme. Its ATPase activity is stimulated by binding to RNAP.

Transcription regulator that activates transcription by stimulating RNA polymerase (RNAP) recycling in case of stress conditions such as supercoiled DNA or high salt concentrations. Probably acts by releasing the RNAP, when it is trapped or immobilized on tightly supercoiled DNA. Does not activate transcription on linear DNA. Probably not involved in DNA repair. The chain is RNA polymerase-associated protein RapA from Shigella flexneri serotype 5b (strain 8401).